A 101-amino-acid polypeptide reads, in one-letter code: Small ribosomal subunit protein uS14 (101 aa).

This sequence belongs to the universal ribosomal protein uS14 family. Part of the 30S ribosomal subunit. Contacts proteins S3 and S10.

Its function is as follows. Binds 16S rRNA, required for the assembly of 30S particles and may also be responsible for determining the conformation of the 16S rRNA at the A site. The protein is Small ribosomal subunit protein uS14 of Shewanella halifaxensis (strain HAW-EB4).